Consider the following 315-residue polypeptide: Diacylglycerol kinase (315 aa).

One can recognise a DAGKc domain in the interval 1 to 132 (MRKRARIIYN…VDIGKMNNRY (132 aa)). ATP contacts are provided by residues 10–14 (NPTSG), T41, 67–73 (GDGTLNE), and T94. 3 residues coordinate Mg(2+): K213, D216, and Y218. The active-site Proton acceptor is E273.

It belongs to the diacylglycerol/lipid kinase family. Homodimer. Mg(2+) serves as cofactor.

It catalyses the reaction a 1,2-diacyl-sn-glycerol + ATP = a 1,2-diacyl-sn-glycero-3-phosphate + ADP + H(+). Its function is as follows. Catalyzes the phosphorylation of diacylglycerol (DAG) into phosphatidic acid. Is a key enzyme involved in the production of lipoteichoic acid by reintroducing DAG formed from the breakdown of membrane phospholipids into the phosphatidylglycerol biosynthetic pathway. The sequence is that of Diacylglycerol kinase (dagK) from Staphylococcus aureus (strain bovine RF122 / ET3-1).